The chain runs to 350 residues: Holliday junction branch migration complex subunit RuvB (350 aa).

Residues 1–20 (MIEADRLITASPREREEQQD) form a disordered region. Positions 4 to 184 (ADRLITASPR…FGIVQRLEFY (181 aa)) are large ATPase domain (RuvB-L). Residues I23, R24, G65, K68, T69, T70, 131-133 (EDF), R174, Y184, and R221 contribute to the ATP site. T69 contacts Mg(2+). The interval 185–255 (GIDDLATIVT…IADQALNLLD (71 aa)) is small ATPAse domain (RuvB-S). Residues 258-350 (ERGFDHSDRR…SGDLFAVSDE (93 aa)) form a head domain (RuvB-H) region. Residues R294, R313, and R318 each coordinate DNA.

Belongs to the RuvB family. Homohexamer. Forms an RuvA(8)-RuvB(12)-Holliday junction (HJ) complex. HJ DNA is sandwiched between 2 RuvA tetramers; dsDNA enters through RuvA and exits via RuvB. An RuvB hexamer assembles on each DNA strand where it exits the tetramer. Each RuvB hexamer is contacted by two RuvA subunits (via domain III) on 2 adjacent RuvB subunits; this complex drives branch migration. In the full resolvosome a probable DNA-RuvA(4)-RuvB(12)-RuvC(2) complex forms which resolves the HJ.

The protein resides in the cytoplasm. The enzyme catalyses ATP + H2O = ADP + phosphate + H(+). Its function is as follows. The RuvA-RuvB-RuvC complex processes Holliday junction (HJ) DNA during genetic recombination and DNA repair, while the RuvA-RuvB complex plays an important role in the rescue of blocked DNA replication forks via replication fork reversal (RFR). RuvA specifically binds to HJ cruciform DNA, conferring on it an open structure. The RuvB hexamer acts as an ATP-dependent pump, pulling dsDNA into and through the RuvAB complex. RuvB forms 2 homohexamers on either side of HJ DNA bound by 1 or 2 RuvA tetramers; 4 subunits per hexamer contact DNA at a time. Coordinated motions by a converter formed by DNA-disengaged RuvB subunits stimulates ATP hydrolysis and nucleotide exchange. Immobilization of the converter enables RuvB to convert the ATP-contained energy into a lever motion, pulling 2 nucleotides of DNA out of the RuvA tetramer per ATP hydrolyzed, thus driving DNA branch migration. The RuvB motors rotate together with the DNA substrate, which together with the progressing nucleotide cycle form the mechanistic basis for DNA recombination by continuous HJ branch migration. Branch migration allows RuvC to scan DNA until it finds its consensus sequence, where it cleaves and resolves cruciform DNA. The polypeptide is Holliday junction branch migration complex subunit RuvB (Ectopseudomonas mendocina (strain ymp) (Pseudomonas mendocina)).